Consider the following 72-residue polypeptide: Translation initiation factor IF-1 (72 aa).

In terms of domain architecture, S1-like spans 1-72; the sequence is MSKEEVLEFS…TKGRITYRYK (72 aa).

It belongs to the IF-1 family. In terms of assembly, component of the 30S ribosomal translation pre-initiation complex which assembles on the 30S ribosome in the order IF-2 and IF-3, IF-1 and N-formylmethionyl-tRNA(fMet); mRNA recruitment can occur at any time during PIC assembly.

The protein localises to the cytoplasm. Functionally, one of the essential components for the initiation of protein synthesis. Stabilizes the binding of IF-2 and IF-3 on the 30S subunit to which N-formylmethionyl-tRNA(fMet) subsequently binds. Helps modulate mRNA selection, yielding the 30S pre-initiation complex (PIC). Upon addition of the 50S ribosomal subunit IF-1, IF-2 and IF-3 are released leaving the mature 70S translation initiation complex. The polypeptide is Translation initiation factor IF-1 (Bartonella quintana (strain Toulouse) (Rochalimaea quintana)).